We begin with the raw amino-acid sequence, 433 residues long: Glutamate-1-semialdehyde 2,1-aminomutase (433 aa).

At lysine 273 the chain carries N6-(pyridoxal phosphate)lysine.

It belongs to the class-III pyridoxal-phosphate-dependent aminotransferase family. HemL subfamily. In terms of assembly, homodimer. Pyridoxal 5'-phosphate serves as cofactor.

The protein resides in the cytoplasm. It carries out the reaction (S)-4-amino-5-oxopentanoate = 5-aminolevulinate. Its pathway is porphyrin-containing compound metabolism; protoporphyrin-IX biosynthesis; 5-aminolevulinate from L-glutamyl-tRNA(Glu): step 2/2. The sequence is that of Glutamate-1-semialdehyde 2,1-aminomutase from Polynucleobacter necessarius subsp. necessarius (strain STIR1).